Reading from the N-terminus, the 131-residue chain is Large-conductance mechanosensitive channel (131 aa).

A run of 2 helical transmembrane segments spans residues 21 to 41 (VGVI…ADVI) and 76 to 96 (GMFI…FLMI).

This sequence belongs to the MscL family. As to quaternary structure, homopentamer.

It is found in the cell inner membrane. In terms of biological role, channel that opens in response to stretch forces in the membrane lipid bilayer. May participate in the regulation of osmotic pressure changes within the cell. This Histophilus somni (strain 129Pt) (Haemophilus somnus) protein is Large-conductance mechanosensitive channel.